Reading from the N-terminus, the 351-residue chain is Heat-inducible transcription repressor HrcA (351 aa).

This sequence belongs to the HrcA family.

Negative regulator of class I heat shock genes (grpE-dnaK-dnaJ and groELS operons). Prevents heat-shock induction of these operons. The polypeptide is Heat-inducible transcription repressor HrcA (Acetivibrio thermocellus (strain ATCC 27405 / DSM 1237 / JCM 9322 / NBRC 103400 / NCIMB 10682 / NRRL B-4536 / VPI 7372) (Clostridium thermocellum)).